Here is a 177-residue protein sequence, read N- to C-terminus: Prorelaxin (177 aa).

Residues 1–25 (MLRWFLSHLLGVWLLLSQLPREIPA) form the signal peptide. 3 cysteine pairs are disulfide-bonded: Cys34–Cys164, Cys46–Cys177, and Cys163–Cys168. Positions 63 to 149 (QISEPLAEVV…KSLSKLDKHP (87 aa)) are cleaved as a propeptide — connecting peptide.

Belongs to the insulin family. In terms of assembly, heterodimer of a B chain and an A chain linked by two disulfide bonds. In terms of tissue distribution, placenta; syncytiotrophoblast.

The protein localises to the secreted. In terms of biological role, relaxin is an ovarian hormone that acts with estrogen to produce dilatation of the birth canal in many mammals. This chain is Prorelaxin (RLN), found in Canis lupus familiaris (Dog).